A 278-amino-acid polypeptide reads, in one-letter code: Thiazole synthase (278 aa).

Lysine 107 acts as the Schiff-base intermediate with DXP in catalysis. Residues glycine 168, 194-195 (AG), and 216-217 (AS) contribute to the 1-deoxy-D-xylulose 5-phosphate site.

The protein belongs to the ThiG family. As to quaternary structure, homotetramer. Forms heterodimers with either ThiH or ThiS.

Its subcellular location is the cytoplasm. The enzyme catalyses [ThiS sulfur-carrier protein]-C-terminal-Gly-aminoethanethioate + 2-iminoacetate + 1-deoxy-D-xylulose 5-phosphate = [ThiS sulfur-carrier protein]-C-terminal Gly-Gly + 2-[(2R,5Z)-2-carboxy-4-methylthiazol-5(2H)-ylidene]ethyl phosphate + 2 H2O + H(+). Its pathway is cofactor biosynthesis; thiamine diphosphate biosynthesis. Functionally, catalyzes the rearrangement of 1-deoxy-D-xylulose 5-phosphate (DXP) to produce the thiazole phosphate moiety of thiamine. Sulfur is provided by the thiocarboxylate moiety of the carrier protein ThiS. In vitro, sulfur can be provided by H(2)S. The sequence is that of Thiazole synthase from Corynebacterium urealyticum (strain ATCC 43042 / DSM 7109).